Reading from the N-terminus, the 76-residue chain is Omega-conotoxin-like TeAr94 (76 aa).

The signal sequence occupies residues 1–22 (MKLTCMMIVAVLFLTAWTFVTA). A propeptide spanning residues 23–50 (VPHSSNALENLYLKAHHEMNNPEDSELN) is cleaved from the precursor. 3 disulfide bridges follow: Cys-53-Cys-67, Cys-60-Cys-71, and Cys-66-Cys-75.

The protein belongs to the conotoxin O1 superfamily. Expressed by the venom duct.

Its subcellular location is the secreted. Omega-conotoxins act at presynaptic membranes, they bind and block voltage-gated calcium channels. The polypeptide is Omega-conotoxin-like TeAr94 (Conus textile (Cloth-of-gold cone)).